A 396-amino-acid polypeptide reads, in one-letter code: CCA-adding enzyme (396 aa).

Residues Gly32 and Arg35 each contribute to the ATP site. Residues Gly32 and Arg35 each coordinate CTP. Positions 45 and 47 each coordinate Mg(2+). The ATP site is built by Arg116, Asp159, Arg162, Arg165, and Arg168. Residues Arg116, Asp159, Arg162, Arg165, and Arg168 each contribute to the CTP site.

It belongs to the tRNA nucleotidyltransferase/poly(A) polymerase family. Bacterial CCA-adding enzyme type 3 subfamily. Homodimer. Mg(2+) is required as a cofactor.

The enzyme catalyses a tRNA precursor + 2 CTP + ATP = a tRNA with a 3' CCA end + 3 diphosphate. It catalyses the reaction a tRNA with a 3' CCA end + 2 CTP + ATP = a tRNA with a 3' CCACCA end + 3 diphosphate. Functionally, catalyzes the addition and repair of the essential 3'-terminal CCA sequence in tRNAs without using a nucleic acid template. Adds these three nucleotides in the order of C, C, and A to the tRNA nucleotide-73, using CTP and ATP as substrates and producing inorganic pyrophosphate. tRNA 3'-terminal CCA addition is required both for tRNA processing and repair. Also involved in tRNA surveillance by mediating tandem CCA addition to generate a CCACCA at the 3' terminus of unstable tRNAs. While stable tRNAs receive only 3'-terminal CCA, unstable tRNAs are marked with CCACCA and rapidly degraded. The protein is CCA-adding enzyme of Lactobacillus delbrueckii subsp. bulgaricus (strain ATCC BAA-365 / Lb-18).